The primary structure comprises 209 residues: Shikimate kinase (209 aa).

47 to 52 (GAGKTT) serves as a coordination point for ATP. Thr-51 contributes to the Mg(2+) binding site. Substrate is bound by residues Asp-69, Arg-93, and Gly-115. Arg-153 provides a ligand contact to ATP. Arg-172 lines the substrate pocket.

It belongs to the shikimate kinase family. In terms of assembly, monomer. Mg(2+) is required as a cofactor.

It localises to the cytoplasm. The enzyme catalyses shikimate + ATP = 3-phosphoshikimate + ADP + H(+). It participates in metabolic intermediate biosynthesis; chorismate biosynthesis; chorismate from D-erythrose 4-phosphate and phosphoenolpyruvate: step 5/7. Catalyzes the specific phosphorylation of the 3-hydroxyl group of shikimic acid using ATP as a cosubstrate. The protein is Shikimate kinase of Bordetella avium (strain 197N).